The following is a 739-amino-acid chain: MSINEEDYLQLEKEIKLDDIDFSDLEEKYEVNIGLDNYIIVDGAPIAPEAKVPVLIKVLRKLFSQVGEIVEGDEGIYMPLENGKSKGYLFIQFKSTESADLAIKKLHGKKLDQNHRLLVNKLSDMEKYGVDGAVNEEFIEPEIEPFQSHGYLKSWLQDEQGRDQMVLHFSETVGVYWNKKSADPEPVIEPRKGFTSKYAKFSPKGTYLFSIHPQGIQSWGGANFNSIKRFFHQQVRLVDFSPNEKFMVTLSPIPISLPDSTVDRAQFPFGPESEGHKLVIWNMITGEPVRTFALPPHLEGQKEMPWPLVKWSYDDKYCARQGPDALAIYETESNFQLLDKKLVKVDGIQDFEWAPAGVKLHNSKAVDGKHVLSYWTPESTNQTARVALMQIPSREILRTVNLFQVSDCKMHWQSNGKLLCVKVDRHTKSGKTIFSNLEFFKTNERDIPVEKLELKDVVVNFAWEPNTERFITISRLDDGNPNPAIPKNTISFYAPEVTKGGVNHNSKKKGGAAIAAAVAAAAINNQSSTKYKAYTKIENKHSNTIFWSPKGRYVVVATISRTSGELEFFDVSFDDETNKKSLPANVKLLKTDKFSGMTNISWDPSGRFVAAWSTSWLHAIENGYRLYEFTGNLLRDDSIDQFKDFVWRPRPPSLLTNSDKKKVRSNLREYSAQFEEADAMEADAAVKEIILARRKALEEWRKYRAKHISKQGNSKNEVQAEIIEEIKEEIIEEKEEIVE.

The interval Met-1–Ser-98 is sufficient for interaction with HCR1 and TIF32. Residues Met-1–Phe-224 form a sufficient for interaction with PIC8 region. The region spanning Asn-37 to Asp-124 is the RRM domain. WD repeat units follow at residues Pro-190–Arg-229, Phe-231–Ala-293, Gln-301–Asp-339, Val-343–Arg-385, Glu-453–Val-502, Ile-537–Lys-579, and Asp-592–Thr-630.

This sequence belongs to the eIF-3 subunit B family. As to quaternary structure, component of the eukaryotic translation initiation factor 3 (eIF-3) complex.

It localises to the cytoplasm. Functionally, RNA-binding component of the eukaryotic translation initiation factor 3 (eIF-3) complex, which is involved in protein synthesis of a specialized repertoire of mRNAs and, together with other initiation factors, stimulates binding of mRNA and methionyl-tRNAi to the 40S ribosome. The eIF-3 complex specifically targets and initiates translation of a subset of mRNAs involved in cell proliferation. This is Eukaryotic translation initiation factor 3 subunit B from Candida albicans (strain SC5314 / ATCC MYA-2876) (Yeast).